The chain runs to 265 residues: 3-methyl-2-oxobutanoate hydroxymethyltransferase (265 aa).

2 residues coordinate Mg(2+): D44 and D83. 3-methyl-2-oxobutanoate is bound by residues 44–45, D83, and K113; that span reads DS. E115 serves as a coordination point for Mg(2+). E183 serves as the catalytic Proton acceptor.

The protein belongs to the PanB family. Homodecamer; pentamer of dimers. Mg(2+) serves as cofactor.

The protein localises to the cytoplasm. It carries out the reaction 3-methyl-2-oxobutanoate + (6R)-5,10-methylene-5,6,7,8-tetrahydrofolate + H2O = 2-dehydropantoate + (6S)-5,6,7,8-tetrahydrofolate. It functions in the pathway cofactor biosynthesis; (R)-pantothenate biosynthesis; (R)-pantoate from 3-methyl-2-oxobutanoate: step 1/2. Its function is as follows. Catalyzes the reversible reaction in which hydroxymethyl group from 5,10-methylenetetrahydrofolate is transferred onto alpha-ketoisovalerate to form ketopantoate. This chain is 3-methyl-2-oxobutanoate hydroxymethyltransferase, found in Leptospira borgpetersenii serovar Hardjo-bovis (strain L550).